Here is a 409-residue protein sequence, read N- to C-terminus: Cdc42 effector protein 1 (409 aa).

The segment at 1 to 29 (MPGPQGGTGAPTMSLGKLSPVGWVSSSHG) is disordered. A phosphoserine mark is found at S19 and S27. At T34 the chain carries Phosphothreonine. The CRIB domain maps to 38–52 (ISPPLGDFRHTMHVG). S39 carries the phosphoserine modification. R53 bears the Omega-N-methylarginine mark. A phosphoserine mark is found at S65, S77, S101, S113, S121, and S139. A compositionally biased stretch (basic and acidic residues) spans 167–189 (PRVEKHSNRDRDRDPDHSQDREQ). The disordered stretch occupies residues 167-203 (PRVEKHSNRDRDRDPDHSQDREQSSFPSEPTPNPELR). S191, S205, S207, and S210 each carry phosphoserine. Repeat copies occupy residues 235–241 (PAAETPV), 242–248 (PTANPPA), and 255–261 (PTAKPPA). The interval 235-284 (PAAETPVPTANPPAPAANPAPTAKPPAHAITTLDAVTSLPASAVTSLPAP) is 3 X 7 AA tandem repeats of [PT]-[AT]-A-[ENT]-[PT]-[PTS]-[AG]. Disordered stretches follow at residues 237-260 (AETPVPTANPPAPAANPAPTAKPP) and 282-329 (PAPA…FDRH). A compositionally biased stretch (pro residues) spans 243–258 (TANPPAPAANPAPTAK). Positions 282–291 (PAPAAASSPS) are enriched in low complexity. Phosphoserine occurs at positions 312, 332, 368, and 371.

The protein belongs to the BORG/CEP family. As to quaternary structure, interacts with RHOQ and CDC42, in a GTP-dependent manner.

The protein localises to the endomembrane system. Its subcellular location is the cytoplasm. It localises to the cytoskeleton. Probably involved in the organization of the actin cytoskeleton. Induced membrane extensions in fibroblasts. This is Cdc42 effector protein 1 (Cdc42ep1) from Mus musculus (Mouse).